The sequence spans 619 residues: Keratin, type II cytoskeletal 1 (619 aa).

Residues 1-180 (MSRHFSSRSG…DPEIQKVKTR (180 aa)) are head. Residue arginine 12 is modified to Omega-N-methylarginine. Phosphoserine occurs at positions 18 and 21. The tract at residues 28–49 (QRRTTSSSVRHSGGGGGRFSGG) is disordered. Positions 39-49 (SGGGGGRFSGG) are enriched in gly residues. Arginine 45 is subject to Omega-N-methylarginine. A Phosphoserine modification is found at serine 68. Residues 173–477 (EIQKVKTRER…ELMNTKLALD (305 aa)) adopt a coiled-coil conformation. Residues 181 to 216 (EREQIKSLNNQFASFIDKVRFLEQQNQVLQTKWELL) are coil 1A. The region spanning 181-494 (EREQIKSLNN…TLLEGEESRM (314 aa)) is the IF rod domain. Positions 217-235 (QQVDTSTRTHSLEPYFENY) are linker 1. The tract at residues 236-327 (ISNLRRRVDQ…TLYQAELSQM (92 aa)) is coil 1B. The residue at position 277 (lysine 277) is an N6,N6-dimethyllysine. Positions 328–351 (QTQISETNVILSMDNNRSLDLDSI) are linker 12. Serine 345 carries the post-translational modification Phosphoserine. The interval 352–490 (ISEVKAQYEE…ATYRTLLEGE (139 aa)) is coil 2. Positions 491–619 (ESRMSGECAP…VSTSYSRAVR (129 aa)) are tail. Residues arginine 519 and arginine 575 each carry the omega-N-methylarginine modification. Residues 559–619 (GGGGGGYGSS…VSTSYSRAVR (61 aa)) are disordered. The span at 573–595 (GHRGGSGGGSRSGGSSGGRGSSS) shows a compositional bias: gly residues. The segment covering 596 to 606 (GGIKTSSGSSS) has biased composition (low complexity). Residues 607 to 619 (VKFVSTSYSRAVR) show a composition bias toward polar residues.

Belongs to the intermediate filament family. In terms of assembly, heterotetramer of two type I and two type II keratins. Heterodimer with KRT10. Two heterodimers of KRT1 and KRT10 form a heterotetramer. Forms a heterodimer with KRT14; the interaction is more abundant in the absence of KRT5. Interacts with ITGB1 in the presence of RACK1 and SRC, and with RACK1. Interacts with C1QBP; the association represents a cell surface kininogen receptor. Interacts with EPPK1; interaction is dependent of higher-order structure of intermediate filament. Undergoes deimination of some arginine residues (citrullination).

The protein localises to the cell membrane. The protein resides in the cytoplasm. In terms of biological role, may regulate the activity of kinases such as PKC and SRC via binding to integrin beta-1 (ITB1) and the receptor of activated protein C kinase 1 (RACK1). In complex with C1QBP is a high affinity receptor for kininogen-1/HMWK. This is Keratin, type II cytoskeletal 1 from Canis lupus familiaris (Dog).